A 400-amino-acid chain; its full sequence is Phosphoglycerate kinase (400 aa).

Residues 21–23 (DLN), Arg36, 59–62 (HLGR), Arg114, and Arg147 each bind substrate. Residues Lys202, Glu329, and 355–358 (GGDT) contribute to the ATP site.

The protein belongs to the phosphoglycerate kinase family. Monomer.

It localises to the cytoplasm. The enzyme catalyses (2R)-3-phosphoglycerate + ATP = (2R)-3-phospho-glyceroyl phosphate + ADP. It participates in carbohydrate degradation; glycolysis; pyruvate from D-glyceraldehyde 3-phosphate: step 2/5. The polypeptide is Phosphoglycerate kinase (Psychrobacter cryohalolentis (strain ATCC BAA-1226 / DSM 17306 / VKM B-2378 / K5)).